A 326-amino-acid polypeptide reads, in one-letter code: Nuclear egress protein 1 (326 aa).

A CCCH-type zinc finger spans residues 115–244; it reads CLSLSGMGYY…YAVFPTKSVH (130 aa).

The protein belongs to the herpesviridae NEC1 protein family. Forms a heterohexameric complex with NEC2. Interacts with capsid vertex specific component 2/CVC2; this interaction directs the capsid to the host inner nuclear membrane to initiate budding. Phosphorylated at serine residues in the N-terminus. This phosphorylation regulates the localization within the inner nuclear membrane.

It localises to the host nucleus inner membrane. In terms of biological role, plays an essential role in virion nuclear egress, the first step of virion release from infected cell. Within the host nucleus, NEC1 interacts with the newly formed capsid through the vertexes and directs it to the inner nuclear membrane by associating with NEC2. Induces the budding of the capsid at the inner nuclear membrane as well as its envelopment into the perinuclear space. There, the NEC1/NEC2 complex promotes the fusion of the enveloped capsid with the outer nuclear membrane and the subsequent release of the viral capsid into the cytoplasm where it will reach the secondary budding sites in the host Golgi or trans-Golgi network. This chain is Nuclear egress protein 1, found in Equine herpesvirus 1 (strain Ab4p) (EHV-1).